The primary structure comprises 464 residues: L-aspartate oxidase (464 aa).

FAD contacts are provided by residues 11 to 14 and 40 to 47; these read GGLA and NSYLAQAG. Residue Arg-251 is the Proton donor/acceptor of the active site. Residues Glu-332 and 348 to 349 each bind FAD; that span reads SL.

Belongs to the FAD-dependent oxidoreductase 2 family. NadB subfamily. FAD is required as a cofactor.

Its subcellular location is the cytoplasm. The enzyme catalyses L-aspartate + O2 = iminosuccinate + H2O2. Its pathway is cofactor biosynthesis; NAD(+) biosynthesis; iminoaspartate from L-aspartate (oxidase route): step 1/1. Functionally, catalyzes the oxidation of L-aspartate to iminoaspartate, the first step in the de novo biosynthesis of NAD(+). The chain is L-aspartate oxidase (nadB) from Pyrococcus abyssi (strain GE5 / Orsay).